The primary structure comprises 350 residues: Twinfilin-1 (350 aa).

N-acetylserine is present on S2. Residues 2-139 (SHQTGIQASE…SLHGYKKYLL (138 aa)) enclose the ADF-H 1 domain. 2 positions are modified to phosphoserine: S143 and S277. Residues 177–313 (GVAFPISQEA…TADFLYEEVH (137 aa)) enclose the ADF-H 2 domain. Position 309 is a phosphotyrosine (Y309). The interval 316–350 (QHAHKQSFAKPKGPSGKRGIRRIIRGPAETEATTE) is disordered. Position 349 is a phosphothreonine (T349).

Belongs to the actin-binding proteins ADF family. Twinfilin subfamily. As to quaternary structure, interacts with G-actin; ADP-actin form and capping protein (CP). May also be able to interact with TWF2 and phosphoinositides, PI(4,5)P2. When bound to PI(4,5)P2, it is down-regulated. Interacts with ACTG1. Phosphorylated on serine and threonine residues.

The protein resides in the cytoplasm. It is found in the cytoskeleton. In terms of biological role, actin-binding protein involved in motile and morphological processes. Inhibits actin polymerization, likely by sequestering G-actin. By capping the barbed ends of filaments, it also regulates motility. Seems to play an important role in clathrin-mediated endocytosis and distribution of endocytic organelles. The sequence is that of Twinfilin-1 (TWF1) from Bos taurus (Bovine).